Consider the following 239-residue polypeptide: Fatty acid metabolism regulator protein (239 aa).

The HTH gntR-type domain occupies 6–74 (KGPASFAEKY…HGKPTRVNNF (69 aa)). Residues 34–53 (ERELSELIGVTRTTLREVLQ) constitute a DNA-binding region (H-T-H motif).

Homodimer.

The protein resides in the cytoplasm. In terms of biological role, multifunctional regulator of fatty acid metabolism. This Shewanella halifaxensis (strain HAW-EB4) protein is Fatty acid metabolism regulator protein.